The primary structure comprises 458 residues: UDP-N-acetylmuramoylalanine--D-glutamate ligase (458 aa).

119–125 (GSNGKTT) contributes to the ATP binding site.

The protein belongs to the MurCDEF family.

The protein localises to the cytoplasm. It carries out the reaction UDP-N-acetyl-alpha-D-muramoyl-L-alanine + D-glutamate + ATP = UDP-N-acetyl-alpha-D-muramoyl-L-alanyl-D-glutamate + ADP + phosphate + H(+). The protein operates within cell wall biogenesis; peptidoglycan biosynthesis. Its function is as follows. Cell wall formation. Catalyzes the addition of glutamate to the nucleotide precursor UDP-N-acetylmuramoyl-L-alanine (UMA). In Limosilactobacillus fermentum (strain NBRC 3956 / LMG 18251) (Lactobacillus fermentum), this protein is UDP-N-acetylmuramoylalanine--D-glutamate ligase.